The primary structure comprises 402 residues: MASYKNIPSTAKGSPISFDFSFPQPKLDHLRQVLELHPLGREAPSKTLRGSSKPQWFGNAKEIMRRFDWAAEEELLKAFPHYVVGVEDTIGGQMLQVHFVALFSTSPDAIPVLLIHSWFSSYVEYLCLLSVFTERFPQACDLPFHVIVPSLPGYDFSSPLSRETNNAQINEDNARVLNQLMVNLGFGAGSGGIGGYVVHGGVSSLRMCYTLAKEYKDCRALHANLDGAYRHTLTSSGGDEFEAVKSVLAELHPPEDWDSHERDMIRLAISTSPVSLLALIGSQFFGEQEQGAALRMVALIVAHHWMTDTYPDASQESYCIKDMSAEDLSHVLKHTGLEPNKPVGISFFSHGQGSASDIRPIVDGSSWSSRHEGNPFVAVLDQPNQTVGDLLGFVRQVQKQHS.

This sequence belongs to the peptidase S33 family.

It participates in mycotoxin biosynthesis. Its function is as follows. Putative epoxide hydrolase; part of the gene clusters that mediate the biosynthesis of the host-selective toxins (HSTs) AF-toxins responsible for Alternaria black spot of strawberry disease by the strawberry pathotype. AF-toxin I and III are valine derivatives of 2,3-dyhydroxy-isovaleric acid and 2-hydroxy-isovaleric acid respectively, while AF II is an isoleucine derivative of 2-hydroxy-valeric acid. These derivatives are bound to a 9,10-epoxy-8-hydroxy-9-methyl-decatrienoic acid (EDA) moiety. On cellular level, AF-toxins affect plasma membrane of susceptible cells and cause a sudden increase in loss of K(+) after a few minutes of toxin treatment. The aldo-keto reductase AFTS1 catalyzes the conversion of 2-keto-isovaleric acid (2-KIV) to 2-hydroxy-isovaleric acid (2-HIV) by reduction of its ketone to an alcohol. The acyl-CoA ligase AFT1, the hydrolase AFT2 and the enoyl-CoA hydratases AFT3 and AFT6, but also the polyketide synthase AFT9, the acyl-CoA dehydrogenase AFT10, the cytochrome P450 monooxygenase AFT11 and the oxidoreductase AFT12 are all involved in the biosynthesis of the AK-, AF- and ACT-toxin common EDA structural moiety. The exact function of each enzyme, and of additional enzymes identified within the AF-toxin clusters have still to be determined. The protein is Putative epoxide hydrolase AFT8 of Alternaria alternata (Alternaria rot fungus).